Here is a 290-residue protein sequence, read N- to C-terminus: Eukaryotic translation initiation factor 3 subunit G (290 aa).

Disordered regions lie at residues 1 to 35 (MSRL…DGTK) and 157 to 200 (ESTG…GERM). One can recognise an RRM domain in the interval 210–288 (ATLRVTNVSE…LILRVEFAKR (79 aa)).

Belongs to the eIF-3 subunit G family. Component of the eukaryotic translation initiation factor 3 (eIF-3) complex.

It localises to the cytoplasm. Its function is as follows. RNA-binding component of the eukaryotic translation initiation factor 3 (eIF-3) complex, which is involved in protein synthesis of a specialized repertoire of mRNAs and, together with other initiation factors, stimulates binding of mRNA and methionyl-tRNAi to the 40S ribosome. The eIF-3 complex specifically targets and initiates translation of a subset of mRNAs involved in cell proliferation. This subunit can bind 18S rRNA. This is Eukaryotic translation initiation factor 3 subunit G (tif35) from Aspergillus clavatus (strain ATCC 1007 / CBS 513.65 / DSM 816 / NCTC 3887 / NRRL 1 / QM 1276 / 107).